The primary structure comprises 207 residues: MARSKTSQRWLKEHFDDPYVKMAQKDGYRSRASYKLLEIQEKDRILRPGMTVVDLGAAPGGWSQVTSRVIGDKGRLIASDILEMDSIPDVTFIQGDFTDDAVFARILEAIGENPVDLVISDMAPNMSGVRAADQPRAMYLCELALDLAGRVLRPGGDFLIKIFQGEGFDTYHRQVRDSFDKVQMRKPLSSRDRSREQYLLARGFRGV.

S-adenosyl-L-methionine contacts are provided by Gly-60, Trp-62, Asp-80, Asp-96, and Asp-121. Lys-161 functions as the Proton acceptor in the catalytic mechanism.

Belongs to the class I-like SAM-binding methyltransferase superfamily. RNA methyltransferase RlmE family.

It is found in the cytoplasm. It carries out the reaction uridine(2552) in 23S rRNA + S-adenosyl-L-methionine = 2'-O-methyluridine(2552) in 23S rRNA + S-adenosyl-L-homocysteine + H(+). Its function is as follows. Specifically methylates the uridine in position 2552 of 23S rRNA at the 2'-O position of the ribose in the fully assembled 50S ribosomal subunit. This is Ribosomal RNA large subunit methyltransferase E from Ectopseudomonas mendocina (strain ymp) (Pseudomonas mendocina).